We begin with the raw amino-acid sequence, 138 residues long: Cysteine desulfuration protein SufE (138 aa).

Catalysis depends on C51, which acts as the Cysteine persulfide intermediate.

It belongs to the SufE family. As to quaternary structure, homodimer. Interacts with SufS.

It localises to the cytoplasm. It participates in cofactor biosynthesis; iron-sulfur cluster biosynthesis. Participates in cysteine desulfuration mediated by SufS. Cysteine desulfuration mobilizes sulfur from L-cysteine to yield L-alanine and constitutes an essential step in sulfur metabolism for biosynthesis of a variety of sulfur-containing biomolecules. Functions as a sulfur acceptor for SufS, by mediating the direct transfer of the sulfur atom from the S-sulfanylcysteine of SufS, an intermediate product of cysteine desulfuration process. The sequence is that of Cysteine desulfuration protein SufE from Escherichia coli O6:K15:H31 (strain 536 / UPEC).